The following is a 627-amino-acid chain: Altered inheritance of mitochondria protein 9, mitochondrial (627 aa).

A mitochondrion-targeting transit peptide spans 1–43 (MIRYTVAGHSRRCVVGASKRVGAIKCITVAATKRFISNKPNEV).

Belongs to the AIM9 family.

It localises to the mitochondrion. This Saccharomyces cerevisiae (strain ATCC 204508 / S288c) (Baker's yeast) protein is Altered inheritance of mitochondria protein 9, mitochondrial (AIM9).